The primary structure comprises 831 residues: Translation initiation factor IF-2 (831 aa).

The tr-type G domain maps to 329-499; sequence TRAPVVTVMG…LLISEMQDLK (171 aa). Positions 338–345 are G1; it reads GHVDHGKT. 338–345 serves as a coordination point for GTP; the sequence is GHVDHGKT. The tract at residues 363 to 367 is G2; sequence GITQH. The segment at 385–388 is G3; that stretch reads DTPG. Residues 385 to 389 and 439 to 442 contribute to the GTP site; these read DTPGH and NKID. Residues 439-442 form a G4 region; sequence NKID. A G5 region spans residues 475–477; sequence SAL.

Belongs to the TRAFAC class translation factor GTPase superfamily. Classic translation factor GTPase family. IF-2 subfamily.

It localises to the cytoplasm. One of the essential components for the initiation of protein synthesis. Protects formylmethionyl-tRNA from spontaneous hydrolysis and promotes its binding to the 30S ribosomal subunits. Also involved in the hydrolysis of GTP during the formation of the 70S ribosomal complex. In Rickettsia typhi (strain ATCC VR-144 / Wilmington), this protein is Translation initiation factor IF-2.